Reading from the N-terminus, the 319-residue chain is Methionyl-tRNA formyltransferase (319 aa).

113-116 (SLLP) is a (6S)-5,6,7,8-tetrahydrofolate binding site.

This sequence belongs to the Fmt family.

The enzyme catalyses L-methionyl-tRNA(fMet) + (6R)-10-formyltetrahydrofolate = N-formyl-L-methionyl-tRNA(fMet) + (6S)-5,6,7,8-tetrahydrofolate + H(+). Its function is as follows. Attaches a formyl group to the free amino group of methionyl-tRNA(fMet). The formyl group appears to play a dual role in the initiator identity of N-formylmethionyl-tRNA by promoting its recognition by IF2 and preventing the misappropriation of this tRNA by the elongation apparatus. The sequence is that of Methionyl-tRNA formyltransferase from Pseudomonas fluorescens (strain ATCC BAA-477 / NRRL B-23932 / Pf-5).